Here is a 250-residue protein sequence, read N- to C-terminus: Triosephosphate isomerase (250 aa).

9–11 provides a ligand contact to substrate; it reads NWK. The active-site Electrophile is His94. The active-site Proton acceptor is Glu166. Residues Gly172, Ser211, and 232-233 each bind substrate; that span reads GG.

It belongs to the triosephosphate isomerase family. In terms of assembly, homodimer.

The protein resides in the cytoplasm. It carries out the reaction D-glyceraldehyde 3-phosphate = dihydroxyacetone phosphate. It functions in the pathway carbohydrate biosynthesis; gluconeogenesis. The protein operates within carbohydrate degradation; glycolysis; D-glyceraldehyde 3-phosphate from glycerone phosphate: step 1/1. Its function is as follows. Involved in the gluconeogenesis. Catalyzes stereospecifically the conversion of dihydroxyacetone phosphate (DHAP) to D-glyceraldehyde-3-phosphate (G3P). The sequence is that of Triosephosphate isomerase from Methylococcus capsulatus (strain ATCC 33009 / NCIMB 11132 / Bath).